The primary structure comprises 101 residues: NAD(P)H-quinone oxidoreductase subunit 4L, chloroplastic (101 aa).

The next 3 membrane-spanning stretches (helical) occupy residues 2–22 (MLEH…YGLI), 32–52 (MCLE…SDFF), and 61–81 (IFSI…SAIV).

Belongs to the complex I subunit 4L family. In terms of assembly, NDH is composed of at least 16 different subunits, 5 of which are encoded in the nucleus.

It localises to the plastid. Its subcellular location is the chloroplast thylakoid membrane. The catalysed reaction is a plastoquinone + NADH + (n+1) H(+)(in) = a plastoquinol + NAD(+) + n H(+)(out). It carries out the reaction a plastoquinone + NADPH + (n+1) H(+)(in) = a plastoquinol + NADP(+) + n H(+)(out). Its function is as follows. NDH shuttles electrons from NAD(P)H:plastoquinone, via FMN and iron-sulfur (Fe-S) centers, to quinones in the photosynthetic chain and possibly in a chloroplast respiratory chain. The immediate electron acceptor for the enzyme in this species is believed to be plastoquinone. Couples the redox reaction to proton translocation, and thus conserves the redox energy in a proton gradient. In Gossypium barbadense (Sea Island cotton), this protein is NAD(P)H-quinone oxidoreductase subunit 4L, chloroplastic.